Reading from the N-terminus, the 135-residue chain is S-adenosylmethionine decarboxylase proenzyme (135 aa).

The Schiff-base intermediate with substrate; via pyruvic acid role is filled by Ser-63. Ser-63 carries the post-translational modification Pyruvic acid (Ser); by autocatalysis. Catalysis depends on His-68, which acts as the Proton acceptor; for processing activity. Cys-83 acts as the Proton donor; for catalytic activity in catalysis.

This sequence belongs to the prokaryotic AdoMetDC family. Type 1 subfamily. As to quaternary structure, heterotetramer of two alpha and two beta chains arranged as a dimer of alpha/beta heterodimers. The cofactor is pyruvate. Is synthesized initially as an inactive proenzyme. Formation of the active enzyme involves a self-maturation process in which the active site pyruvoyl group is generated from an internal serine residue via an autocatalytic post-translational modification. Two non-identical subunits are generated from the proenzyme in this reaction, and the pyruvate is formed at the N-terminus of the alpha chain, which is derived from the carboxyl end of the proenzyme. The post-translation cleavage follows an unusual pathway, termed non-hydrolytic serinolysis, in which the side chain hydroxyl group of the serine supplies its oxygen atom to form the C-terminus of the beta chain, while the remainder of the serine residue undergoes an oxidative deamination to produce ammonia and the pyruvoyl group blocking the N-terminus of the alpha chain.

The enzyme catalyses S-adenosyl-L-methionine + H(+) = S-adenosyl 3-(methylsulfanyl)propylamine + CO2. It functions in the pathway amine and polyamine biosynthesis; S-adenosylmethioninamine biosynthesis; S-adenosylmethioninamine from S-adenosyl-L-methionine: step 1/1. In terms of biological role, catalyzes the decarboxylation of S-adenosylmethionine to S-adenosylmethioninamine (dcAdoMet), the propylamine donor required for the synthesis of the polyamines spermine and spermidine from the diamine putrescine. This is S-adenosylmethionine decarboxylase proenzyme from Thermodesulfovibrio yellowstonii (strain ATCC 51303 / DSM 11347 / YP87).